A 79-amino-acid polypeptide reads, in one-letter code: ATP synthase subunit c (79 aa).

The next 2 helical transmembrane spans lie at V7–I27 and I56–I76.

The protein belongs to the ATPase C chain family. In terms of assembly, F-type ATPases have 2 components, F(1) - the catalytic core - and F(0) - the membrane proton channel. F(1) has five subunits: alpha(3), beta(3), gamma(1), delta(1), epsilon(1). F(0) has three main subunits: a(1), b(2) and c(10-14). The alpha and beta chains form an alternating ring which encloses part of the gamma chain. F(1) is attached to F(0) by a central stalk formed by the gamma and epsilon chains, while a peripheral stalk is formed by the delta and b chains.

It is found in the cell membrane. Functionally, f(1)F(0) ATP synthase produces ATP from ADP in the presence of a proton or sodium gradient. F-type ATPases consist of two structural domains, F(1) containing the extramembraneous catalytic core and F(0) containing the membrane proton channel, linked together by a central stalk and a peripheral stalk. During catalysis, ATP synthesis in the catalytic domain of F(1) is coupled via a rotary mechanism of the central stalk subunits to proton translocation. In terms of biological role, key component of the F(0) channel; it plays a direct role in translocation across the membrane. A homomeric c-ring of between 10-14 subunits forms the central stalk rotor element with the F(1) delta and epsilon subunits. The sequence is that of ATP synthase subunit c from Clostridium botulinum (strain Hall / ATCC 3502 / NCTC 13319 / Type A).